Consider the following 167-residue polypeptide: UPF0114 protein in repA1-repA2 intergenic region (167 aa).

Helical transmembrane passes span 15-35 (LMFP…LKFF), 53-73 (LVLA…LVMV), and 136-156 (IMLC…MAYI).

It belongs to the UPF0114 family.

The protein resides in the cell membrane. The protein is UPF0114 protein in repA1-repA2 intergenic region of Buchnera aphidicola subsp. Schizaphis graminum (strain Sg).